The sequence spans 415 residues: Sensor protein kinase WalK (415 aa).

Residues 11–63 enclose the HAMP domain; the sequence is RTITKPITDMRNQTVEMSRGNYTQRVKIYGNDEIGELALAFNNLSKRVQEAQA. The region spanning 68-138 is the PAS domain; that stretch reads EKRRLDSVIT…EIQENNDSFL (71 aa). Positions 78, 81, 171, and 175 each coordinate Zn(2+). Positions 121–185 constitute a PAC domain; that stretch reads LEDEFKLEEI…QQQVERERRE (65 aa). A Histidine kinase domain is found at 189–407; that stretch reads NVSHELRTPL…SIFITLPCEV (219 aa). H192 carries the post-translational modification Phosphohistidine; by autocatalysis.

As to quaternary structure, forms homodimers. Forms homooligomers. NH4(+) serves as cofactor. Post-translationally, autophosphorylated.

The protein resides in the cell membrane. It carries out the reaction ATP + protein L-histidine = ADP + protein N-phospho-L-histidine.. Its activity is regulated as follows. By zinc. Zinc-binding negatively regulates WalK kinase activity and thus autophosphorylation. Functionally, member of the two-component regulatory system WalK/WalR that regulates genes involved in cell wall metabolism, virulence regulation, biofilm production, oxidative stress resistance and antibiotic resistance via direct or indirect regulation of autolysins. Functions as a sensor protein kinase which is autophosphorylated at a histidine residue in the dimerization domain and transfers its phosphate group to the conserved aspartic acid residue in the regulatory domain of WalR. In turn, WalR binds to the upstream promoter regions of the target genes to positively and negatively regulate their expression. This chain is Sensor protein kinase WalK (walK), found in Staphylococcus aureus.